The chain runs to 404 residues: Serine/threonine transporter SstT (404 aa).

The next 8 helical transmembrane spans lie at 17 to 37 (IGIG…LTGF), 39 to 59 (ILGK…VFAL), 75 to 95 (MTLI…VAVL), 138 to 158 (ALAT…GLAL), 179 to 199 (IVVW…FTTI), 212 to 232 (FLIL…NPLI), 287 to 307 (IPLG…VLTL), and 313 to 333 (FGIP…AVSA).

Belongs to the dicarboxylate/amino acid:cation symporter (DAACS) (TC 2.A.23) family.

Its subcellular location is the cell membrane. The catalysed reaction is L-serine(in) + Na(+)(in) = L-serine(out) + Na(+)(out). It catalyses the reaction L-threonine(in) + Na(+)(in) = L-threonine(out) + Na(+)(out). In terms of biological role, involved in the import of serine and threonine into the cell, with the concomitant import of sodium (symport system). This chain is Serine/threonine transporter SstT, found in Streptococcus pyogenes serotype M1.